The sequence spans 159 residues: Transcription elongation factor GreA (159 aa).

A coiled-coil region spans residues 43-76 (LSENAEYDAAREEQSQLEAKIGDLENKLASATIL).

It belongs to the GreA/GreB family.

Functionally, necessary for efficient RNA polymerase transcription elongation past template-encoded arresting sites. The arresting sites in DNA have the property of trapping a certain fraction of elongating RNA polymerases that pass through, resulting in locked ternary complexes. Cleavage of the nascent transcript by cleavage factors such as GreA or GreB allows the resumption of elongation from the new 3'terminus. GreA releases sequences of 2 to 3 nucleotides. The chain is Transcription elongation factor GreA from Chlorobaculum parvum (strain DSM 263 / NCIMB 8327) (Chlorobium vibrioforme subsp. thiosulfatophilum).